We begin with the raw amino-acid sequence, 563 residues long: uncharacterized protein (563 aa).

The zn(2)-C6 fungal-type DNA-binding region spans 19–45; that stretch reads CLICRRRKVKCDRQQPCSRCKERNEVC. The tract at residues 56–78 is disordered; the sequence is NVGPHPSHSENASDSETTLEVSP. Positions 64 to 75 are enriched in polar residues; it reads SENASDSETTLE.

It is found in the nucleus. This is an uncharacterized protein from Schizosaccharomyces pombe (strain 972 / ATCC 24843) (Fission yeast).